The following is a 75-amino-acid chain: UPF0270 protein PputGB1_1339 (75 aa).

This sequence belongs to the UPF0270 family.

This chain is UPF0270 protein PputGB1_1339, found in Pseudomonas putida (strain GB-1).